The following is a 383-amino-acid chain: Probable indole-3-pyruvate monooxygenase YUCCA10 (383 aa).

Residue 9 to 14 (GAGPAG) participates in FAD binding. 177–182 (GGGNSG) provides a ligand contact to NADP(+).

It belongs to the FMO family. It depends on FAD as a cofactor.

The catalysed reaction is indole-3-pyruvate + NADPH + O2 + H(+) = (indol-3-yl)acetate + CO2 + NADP(+) + H2O. Its pathway is plant hormone metabolism; auxin biosynthesis. Functionally, involved in auxin biosynthesis. This Arabidopsis thaliana (Mouse-ear cress) protein is Probable indole-3-pyruvate monooxygenase YUCCA10 (YUC10).